A 415-amino-acid chain; its full sequence is Imidazolonepropionase (415 aa).

Positions 83 and 85 each coordinate Fe(3+). Residues H83 and H85 each contribute to the Zn(2+) site. 4-imidazolone-5-propanoate-binding residues include R92, Y155, and H188. Y155 serves as a coordination point for N-formimidoyl-L-glutamate. H250 is a binding site for Fe(3+). Zn(2+) is bound at residue H250. A 4-imidazolone-5-propanoate-binding site is contributed by Q253. D324 is a Fe(3+) binding site. D324 is a Zn(2+) binding site. N326 and G328 together coordinate N-formimidoyl-L-glutamate. Position 329 (S329) interacts with 4-imidazolone-5-propanoate.

This sequence belongs to the metallo-dependent hydrolases superfamily. HutI family. It depends on Zn(2+) as a cofactor. Requires Fe(3+) as cofactor.

It is found in the cytoplasm. It catalyses the reaction 4-imidazolone-5-propanoate + H2O = N-formimidoyl-L-glutamate. It participates in amino-acid degradation; L-histidine degradation into L-glutamate; N-formimidoyl-L-glutamate from L-histidine: step 3/3. Its function is as follows. Catalyzes the hydrolytic cleavage of the carbon-nitrogen bond in imidazolone-5-propanoate to yield N-formimidoyl-L-glutamate. It is the third step in the universal histidine degradation pathway. This is Imidazolonepropionase from Rubrobacter xylanophilus (strain DSM 9941 / JCM 11954 / NBRC 16129 / PRD-1).